The sequence spans 251 residues: Pyrroloquinoline-quinone synthase (251 aa).

The protein belongs to the PqqC family.

It catalyses the reaction 6-(2-amino-2-carboxyethyl)-7,8-dioxo-1,2,3,4,7,8-hexahydroquinoline-2,4-dicarboxylate + 3 O2 = pyrroloquinoline quinone + 2 H2O2 + 2 H2O + H(+). Its pathway is cofactor biosynthesis; pyrroloquinoline quinone biosynthesis. In terms of biological role, ring cyclization and eight-electron oxidation of 3a-(2-amino-2-carboxyethyl)-4,5-dioxo-4,5,6,7,8,9-hexahydroquinoline-7,9-dicarboxylic-acid to PQQ. The protein is Pyrroloquinoline-quinone synthase of Pseudomonas putida (strain ATCC 700007 / DSM 6899 / JCM 31910 / BCRC 17059 / LMG 24140 / F1).